The chain runs to 406 residues: Indole-3-pyruvate monooxygenase YUCCA1 (406 aa).

21-26 (GAGPSG) lines the FAD pocket. 184–189 (GCGNSG) contacts NADP(+).

Belongs to the FMO family. FAD is required as a cofactor. As to expression, expressed in coleoptile tips, root tips, leaf blade tips, shoot apical meristem, vasculature of stems and flowers.

The enzyme catalyses indole-3-pyruvate + NADPH + O2 + H(+) = (indol-3-yl)acetate + CO2 + NADP(+) + H2O. Its function is as follows. Involved in auxin biosynthesis. Converts the indole-3-pyruvic acid (IPA) produced by the TAA family to indole-3-acetic acid (IAA). Functions downstream of TAR2 in auxin biosynthesis. Functions upstream of WOX11, a transcription factor that promotes the development of crown roots. This Oryza sativa subsp. japonica (Rice) protein is Indole-3-pyruvate monooxygenase YUCCA1.